A 201-amino-acid polypeptide reads, in one-letter code: Large ribosomal subunit protein uL4 (201 aa).

The disordered stretch occupies residues 44–71 (RAQKTRAEVTGSGKKPWRQKGTGRARSG).

The protein belongs to the universal ribosomal protein uL4 family. In terms of assembly, part of the 50S ribosomal subunit.

One of the primary rRNA binding proteins, this protein initially binds near the 5'-end of the 23S rRNA. It is important during the early stages of 50S assembly. It makes multiple contacts with different domains of the 23S rRNA in the assembled 50S subunit and ribosome. Its function is as follows. Forms part of the polypeptide exit tunnel. This chain is Large ribosomal subunit protein uL4, found in Pectobacterium carotovorum subsp. carotovorum (strain PC1).